The primary structure comprises 262 residues: 3-methyl-2-oxobutanoate hydroxymethyltransferase (262 aa).

The Mg(2+) site is built by aspartate 42 and aspartate 81. 3-methyl-2-oxobutanoate is bound by residues 42–43 (DS), aspartate 81, and lysine 110. Glutamate 112 serves as a coordination point for Mg(2+). Glutamate 179 acts as the Proton acceptor in catalysis.

The protein belongs to the PanB family. Homodecamer; pentamer of dimers. Mg(2+) is required as a cofactor.

The protein resides in the cytoplasm. It carries out the reaction 3-methyl-2-oxobutanoate + (6R)-5,10-methylene-5,6,7,8-tetrahydrofolate + H2O = 2-dehydropantoate + (6S)-5,6,7,8-tetrahydrofolate. It functions in the pathway cofactor biosynthesis; (R)-pantothenate biosynthesis; (R)-pantoate from 3-methyl-2-oxobutanoate: step 1/2. Functionally, catalyzes the reversible reaction in which hydroxymethyl group from 5,10-methylenetetrahydrofolate is transferred onto alpha-ketoisovalerate to form ketopantoate. The chain is 3-methyl-2-oxobutanoate hydroxymethyltransferase from Methylobacillus flagellatus (strain ATCC 51484 / DSM 6875 / VKM B-1610 / KT).